Consider the following 268-residue polypeptide: Lipopolysaccharide core heptose(I) kinase WaaP (268 aa).

Tyrosine 30, tyrosine 48, and tyrosine 98 each carry phosphotyrosine; by autocatalysis. Aspartate 163 is an active-site residue. Phosphotyrosine; by autocatalysis is present on residues tyrosine 165, tyrosine 211, tyrosine 231, tyrosine 258, and tyrosine 264.

It belongs to the protein kinase superfamily. KdkA/RfaP family. Interacts with acyl-AcpP. The WaaP hydrophobic channel can accommodate acyl chains of different lengths, but myristyl-ACP is likely its physiological binding partner. It depends on Mg(2+) as a cofactor.

It is found in the cytoplasm. It catalyses the reaction an L-alpha-D-Hep-(1-&gt;3)-L-alpha-D-Hep-(1-&gt;5)-[alpha-Kdo-(2-&gt;4)]-alpha-Kdo-(2-&gt;6)-lipid A + ATP = an L-alpha-D-Hep-(1-&gt;3)-4-O-phospho-L-alpha-D-Hep-(1-&gt;5)-[alpha-Kdo-(2-&gt;4)]-alpha-Kdo-(2-&gt;6)-lipid A + ADP + H(+). It carries out the reaction L-tyrosyl-[protein] + ATP = O-phospho-L-tyrosyl-[protein] + ADP + H(+). It participates in bacterial outer membrane biogenesis; LPS core biosynthesis. Its activity is regulated as follows. Acylated-acyl carrier protein (acyl-ACP) acts as a very tightly bound cofactor necessary for the production and stability of active WaaP kinase. In terms of biological role, kinase involved in the biosynthesis of the core oligosaccharide region of lipopolysaccharide (LPS). Catalyzes the phosphorylation of heptose I (HepI), the first heptose added to the Kdo2-lipid A module. Also has protein-tyrosine kinase activity: autophosphorylates on all Tyr residues; in vitro can phosphorylate poly(Glu,Tyr). The polypeptide is Lipopolysaccharide core heptose(I) kinase WaaP (Pseudomonas aeruginosa (strain ATCC 15692 / DSM 22644 / CIP 104116 / JCM 14847 / LMG 12228 / 1C / PRS 101 / PAO1)).